The sequence spans 121 residues: MISRVTEALSKVKGSIGSNERHALPGVIGDDLLRFGKLPLCLFICIILTAVTVVTTAHHTRLLTAQREQLVLERDALDIEWRNLILEENALGDHSRVERIATEKLQMQHVDPSQENIVVQK.

At 1–34 the chain is on the cytoplasmic side; it reads MISRVTEALSKVKGSIGSNERHALPGVIGDDLLR. Residues 35–57 traverse the membrane as a helical segment; the sequence is FGKLPLCLFICIILTAVTVVTTA. Topologically, residues 58–121 are periplasmic; sequence HHTRLLTAQR…PSQENIVVQK (64 aa).

It belongs to the FtsL family. Part of a complex composed of FtsB, FtsL and FtsQ.

Its subcellular location is the cell inner membrane. Essential cell division protein. May link together the upstream cell division proteins, which are predominantly cytoplasmic, with the downstream cell division proteins, which are predominantly periplasmic. This is Cell division protein FtsL from Salmonella typhimurium (strain LT2 / SGSC1412 / ATCC 700720).